Reading from the N-terminus, the 354-residue chain is Isocitrate dehydrogenase [NAD] regulatory subunit A, mitochondrial (354 aa).

S95, N97, R101, R111, and R132 together coordinate substrate. D219, D243, and D247 together coordinate Mg(2+). NADP(+)-binding positions include 276–282 and N289; that span reads HGTAPDI.

It belongs to the isocitrate and isopropylmalate dehydrogenases family. As to quaternary structure, heterooligomer of catalytic and regulatory subunits. Requires Mg(2+) as cofactor. Mn(2+) serves as cofactor.

Its subcellular location is the mitochondrion. The catalysed reaction is D-threo-isocitrate + NAD(+) = 2-oxoglutarate + CO2 + NADH. Performs an essential role in the oxidative function of the citric acid cycle. The polypeptide is Isocitrate dehydrogenase [NAD] regulatory subunit A, mitochondrial (idhA) (Dictyostelium discoideum (Social amoeba)).